The sequence spans 205 residues: MSRKLHEEELTPEGMDAAQNADPAGDPVSENEGALPAAEPQAQILQEEVERLRAERDAALADREAFQDRLARLQAEFDNARKREAKERSEFRDYSVASTAEAFLPVLDNFQLALASTGTAEQLRMGVELIVKQMDEALRSLSIIPIETVGAQFDPRVHEALEMVEREDVPDHQVIEEVRRGYRIRERLMRPALVRIASNSKQTQA.

Residues 1 to 40 (MSRKLHEEELTPEGMDAAQNADPAGDPVSENEGALPAAEP) are disordered.

The protein belongs to the GrpE family. In terms of assembly, homodimer.

The protein resides in the cytoplasm. Its function is as follows. Participates actively in the response to hyperosmotic and heat shock by preventing the aggregation of stress-denatured proteins, in association with DnaK and GrpE. It is the nucleotide exchange factor for DnaK and may function as a thermosensor. Unfolded proteins bind initially to DnaJ; upon interaction with the DnaJ-bound protein, DnaK hydrolyzes its bound ATP, resulting in the formation of a stable complex. GrpE releases ADP from DnaK; ATP binding to DnaK triggers the release of the substrate protein, thus completing the reaction cycle. Several rounds of ATP-dependent interactions between DnaJ, DnaK and GrpE are required for fully efficient folding. In Acidobacterium capsulatum (strain ATCC 51196 / DSM 11244 / BCRC 80197 / JCM 7670 / NBRC 15755 / NCIMB 13165 / 161), this protein is Protein GrpE.